A 487-amino-acid polypeptide reads, in one-letter code: Zinc finger protein 345 (487 aa).

15 consecutive C2H2-type zinc fingers follow at residues 62–84, 90–112, 118–140, 146–168, 174–196, 202–224, 230–252, 258–280, 286–308, 314–336, 342–364, 370–392, 398–420, 426–448, and 454–476; these read LECKECGKDFSFVSVLIRHQRIH, YECKECGKAFGSGANLAYHQRIH, YECNECGKAFGSGSNLTHHQRIH, YECKECGKAFSFGSGLIRHQIIH, YECKVCGKSFSFESALTRHHRIH, YECKDCGKAFGSGSNLTQHRRVH, YECKGCGMAFSSGSALTRHQRIH, YICNECGKAFSFGSALTRHQRIH, YVCKECGKAFNSGSDLTQHQRIH, YECKECEKAFRSGSKLIQHQRMH, YECKECGKAFSSGSDLTQHQRIH, YECKECGKAFASGSKLIQHQLIH, YECRECRKSFSSGSALNRHQRIH, YECKECEKTFGTGSTLTQHQRMH, and YECKACGKALGRGSEIQQHKKNH.

It belongs to the krueppel C2H2-type zinc-finger protein family.

It is found in the nucleus. May be involved in transcriptional regulation. This is Zinc finger protein 345 (ZNF345) from Bos taurus (Bovine).